We begin with the raw amino-acid sequence, 194 residues long: RNA polymerase II subunit A C-terminal domain phosphatase SSU72 like protein 2 (194 aa).

It belongs to the SSU72 phosphatase family.

Its subcellular location is the nucleus. The enzyme catalyses O-phospho-L-seryl-[protein] + H2O = L-seryl-[protein] + phosphate. It catalyses the reaction O-phospho-L-threonyl-[protein] + H2O = L-threonyl-[protein] + phosphate. Protein phosphatase that catalyzes the dephosphorylation of the C-terminal domain of RNA polymerase II. Plays a role in RNA processing and termination. The chain is RNA polymerase II subunit A C-terminal domain phosphatase SSU72 like protein 2 from Homo sapiens (Human).